The primary structure comprises 166 residues: Large ribosomal subunit protein uL10 (166 aa).

Belongs to the universal ribosomal protein uL10 family. Part of the ribosomal stalk of the 50S ribosomal subunit. The N-terminus interacts with L11 and the large rRNA to form the base of the stalk. The C-terminus forms an elongated spine to which L12 dimers bind in a sequential fashion forming a multimeric L10(L12)X complex.

Its function is as follows. Forms part of the ribosomal stalk, playing a central role in the interaction of the ribosome with GTP-bound translation factors. This Streptococcus agalactiae serotype V (strain ATCC BAA-611 / 2603 V/R) protein is Large ribosomal subunit protein uL10.